Here is a 159-residue protein sequence, read N- to C-terminus: MQKRAIYPGTFDPITNGHIDIVTRATQMFDHVILAIAASPSKKPMFTLEERVDLAQQATTHLGNVEVVGFSDLMANFARNQHATVLIRGLRAVADFEYEMQLAHMNRHLMPELESVFLMPSKEWSFISSSLVKEVARHQGDVTHFLPENVHQALMAKLA.

Residue Thr-10 participates in substrate binding. ATP-binding positions include 10 to 11 (TF) and His-18. Positions 42, 74, and 88 each coordinate substrate. ATP-binding positions include 89-91 (GLR), Glu-99, and 124-130 (WSFISSS).

Belongs to the bacterial CoaD family. Homohexamer. It depends on Mg(2+) as a cofactor.

It localises to the cytoplasm. It catalyses the reaction (R)-4'-phosphopantetheine + ATP + H(+) = 3'-dephospho-CoA + diphosphate. It functions in the pathway cofactor biosynthesis; coenzyme A biosynthesis; CoA from (R)-pantothenate: step 4/5. Reversibly transfers an adenylyl group from ATP to 4'-phosphopantetheine, yielding dephospho-CoA (dPCoA) and pyrophosphate. This chain is Phosphopantetheine adenylyltransferase, found in Escherichia coli O7:K1 (strain IAI39 / ExPEC).